The sequence spans 72 residues: Antimicrobial peptide MeuNaTxbeta-4 (72 aa).

An N-terminal signal peptide occupies residues 1 to 5 (LIGVK). An LCN-type CS-alpha/beta domain is found at 7–69 (EHGYLLDKYT…LWHYETNKCN (63 aa)). 4 disulfides stabilise this stretch: Cys-18-Cys-68, Cys-22-Cys-43, Cys-29-Cys-50, and Cys-33-Cys-52.

Expressed by the venom gland.

The protein resides in the secreted. In terms of biological role, antimicrobial peptide with weak activity against both Gram-positive and -negative bacteria. Its antibiotic activity is potentiated by other antibacterial peptides such as Meucin-49. This Mesobuthus eupeus (Lesser Asian scorpion) protein is Antimicrobial peptide MeuNaTxbeta-4.